Here is a 338-residue protein sequence, read N- to C-terminus: 1-aminocyclopropane-1-carboxylate deaminase (338 aa).

Lysine 51 is subject to N6-(pyridoxal phosphate)lysine. Residue serine 78 is the Nucleophile of the active site.

It belongs to the ACC deaminase/D-cysteine desulfhydrase family. In terms of assembly, homotrimer. It depends on pyridoxal 5'-phosphate as a cofactor.

The enzyme catalyses 1-aminocyclopropane-1-carboxylate + H2O = 2-oxobutanoate + NH4(+). Its function is as follows. Catalyzes a cyclopropane ring-opening reaction, the irreversible conversion of 1-aminocyclopropane-1-carboxylate (ACC) to ammonia and alpha-ketobutyrate. Allows growth on ACC as a nitrogen source. In Pseudomonas fluorescens, this protein is 1-aminocyclopropane-1-carboxylate deaminase.